We begin with the raw amino-acid sequence, 402 residues long: MDVQERLDAILDITDSKICPHCLGRRFSDVMEGPGNRLRGERLVEKFSLHLEGPCLVCGDVFERLDEAALRVREKVDDLNLEYSSVLVGTRLPDDVLRIDEEIDRRLGIQVEGIKREVNRELGKRVTSILRCPADFESPDLVITVDLRGQIRVHVQINPIFIEGRYRKLVRGIPQTKWPCRSCRGRGCSRCDYTGKMYPTSVEELISEPVLEATGGSDSKFHGSGREDVDVRMLGTGRPFVLEIKEPAIRTPDLRALEDEINRRARGMVEVADLRFSSRNRKVELKESSRKKYKVYRAIVELEGAVSDEDLVKLEKLDLIRQRTPLRVSHRRADRIRERRVLEISWKRLDDHLELIIKAEGGLYIKELISGDSGRTEPSVSSILGVPARCASLDVLEVGEPA.

The 123-residue stretch at 37-159 folds into the THUMP domain; it reads RLRGERLVEK…QIRVHVQINP (123 aa). The Nucleophile role is filled by Asp-228. 2 residues coordinate substrate: Tyr-296 and Tyr-364.

It belongs to the pseudouridine synthase Pus10 family.

It catalyses the reaction uridine(54) in tRNA = pseudouridine(54) in tRNA. The enzyme catalyses uridine(55) in tRNA = pseudouridine(55) in tRNA. Its function is as follows. Responsible for synthesis of pseudouridine from uracil-54 and uracil-55 in the psi GC loop of transfer RNAs. This Methanothermobacter marburgensis (strain ATCC BAA-927 / DSM 2133 / JCM 14651 / NBRC 100331 / OCM 82 / Marburg) (Methanobacterium thermoautotrophicum) protein is tRNA pseudouridine synthase Pus10.